The chain runs to 393 residues: S-adenosylmethionine synthase (393 aa).

His-17 contacts ATP. Asp-19 is a binding site for Mg(2+). Glu-45 lines the K(+) pocket. L-methionine is bound by residues Glu-58 and Gln-106. The tract at residues 106–116 (QSAHIAQGVDA) is flexible loop. ATP contacts are provided by residues 171–173 (DAK), Asp-246, 252–253 (RK), Ala-269, and Lys-273. Asp-246 contacts L-methionine. Lys-277 contributes to the L-methionine binding site.

This sequence belongs to the AdoMet synthase family. In terms of assembly, homotetramer; dimer of dimers. Mg(2+) is required as a cofactor. K(+) serves as cofactor.

Its subcellular location is the cytoplasm. The enzyme catalyses L-methionine + ATP + H2O = S-adenosyl-L-methionine + phosphate + diphosphate. The protein operates within amino-acid biosynthesis; S-adenosyl-L-methionine biosynthesis; S-adenosyl-L-methionine from L-methionine: step 1/1. Functionally, catalyzes the formation of S-adenosylmethionine (AdoMet) from methionine and ATP. The overall synthetic reaction is composed of two sequential steps, AdoMet formation and the subsequent tripolyphosphate hydrolysis which occurs prior to release of AdoMet from the enzyme. The chain is S-adenosylmethionine synthase from Roseobacter denitrificans (strain ATCC 33942 / OCh 114) (Erythrobacter sp. (strain OCh 114)).